The chain runs to 317 residues: Transaldolase (317 aa).

K126 acts as the Schiff-base intermediate with substrate in catalysis.

This sequence belongs to the transaldolase family. Type 1 subfamily. Homodimer.

It localises to the cytoplasm. The catalysed reaction is D-sedoheptulose 7-phosphate + D-glyceraldehyde 3-phosphate = D-erythrose 4-phosphate + beta-D-fructose 6-phosphate. Its pathway is carbohydrate degradation; pentose phosphate pathway; D-glyceraldehyde 3-phosphate and beta-D-fructose 6-phosphate from D-ribose 5-phosphate and D-xylulose 5-phosphate (non-oxidative stage): step 2/3. Transaldolase is important for the balance of metabolites in the pentose-phosphate pathway. The sequence is that of Transaldolase from Burkholderia orbicola (strain AU 1054).